A 1015-amino-acid polypeptide reads, in one-letter code: GTPase-activating Rap/Ran-GAP domain-like protein 3 (1015 aa).

A Rap-GAP domain is found at 200–416; it reads LLVLEEQEGS…RTLDMLIRSL (217 aa). In terms of domain architecture, CNH spans 498-812; it reads PYDIVCGDSW…QLTASRSDIY (315 aa). Disordered stretches follow at residues 821 to 842 and 924 to 1004; these read SASN…PTGY and ELLG…FTFS. The span at 823-835 shows a compositional bias: low complexity; sequence SNCSSRDTSSQSS. The segment covering 949–959 has biased composition (basic and acidic residues); sequence KNKEEEQKRTA.

The protein belongs to the GARNL3 family.

This Danio rerio (Zebrafish) protein is GTPase-activating Rap/Ran-GAP domain-like protein 3 (garnl3).